The sequence spans 370 residues: tRNA-specific 2-thiouridylase MnmA (370 aa).

Residues 20–27 and Met-46 each bind ATP; that span reads GMSGGVDS. The interaction with target base in tRNA stretch occupies residues 106 to 108; the sequence is NPD. The active-site Nucleophile is the Cys-111. Residues Cys-111 and Cys-207 are joined by a disulfide bond. ATP is bound at residue Gly-135. The interaction with tRNA stretch occupies residues 157–159; that stretch reads KDQ. The active-site Cysteine persulfide intermediate is Cys-207. The interaction with tRNA stretch occupies residues 318–319; sequence RY.

This sequence belongs to the MnmA/TRMU family.

The protein localises to the cytoplasm. It carries out the reaction S-sulfanyl-L-cysteinyl-[protein] + uridine(34) in tRNA + AH2 + ATP = 2-thiouridine(34) in tRNA + L-cysteinyl-[protein] + A + AMP + diphosphate + H(+). Functionally, catalyzes the 2-thiolation of uridine at the wobble position (U34) of tRNA, leading to the formation of s(2)U34. In Polynucleobacter asymbioticus (strain DSM 18221 / CIP 109841 / QLW-P1DMWA-1) (Polynucleobacter necessarius subsp. asymbioticus), this protein is tRNA-specific 2-thiouridylase MnmA.